We begin with the raw amino-acid sequence, 681 residues long: Sodium-dependent phosphate transporter 1 (681 aa).

Transmembrane regions (helical) follow at residues 25-45, 66-86, 106-126, 162-182, 201-221, and 234-254; these read NLWM…SVGA, ACIL…AKVS, LMAG…VASF, IVMS…ILFF, ALPI…MYTG, and GTIL…WFFV. Residues 266-295 are disordered; that stretch reads VKSSPSESPLMEKKNNLKDHEETKMAPGDV. Phosphoserine occurs at positions 269 and 273. Basic and acidic residues predominate over residues 275-289; the sequence is LMEKKNNLKDHEETK. Transmembrane regions (helical) follow at residues 513–533, 561–581, 602–622, and 652–672; these read VSLL…FAHG, ATPI…LWVW, FSIE…GLPI, and IFMA…AIMA.

The protein belongs to the inorganic phosphate transporter (PiT) (TC 2.A.20) family. As to expression, ubiquitously expressed.

The protein localises to the cell membrane. The catalysed reaction is 2 Na(+)(out) + phosphate(out) = 2 Na(+)(in) + phosphate(in). Sodium-phosphate symporter which preferentially transports the monovalent form of phosphate with a stoichiometry of two sodium ions per phosphate ion. May play a role in extracellular matrix and cartilage calcification as well as in vascular calcification. Essential for cell proliferation but this function is independent of its phosphate transporter activity. This chain is Sodium-dependent phosphate transporter 1 (Slc20a1), found in Rattus norvegicus (Rat).